The primary structure comprises 87 residues: Small ribosomal subunit protein bS20 (87 aa).

It belongs to the bacterial ribosomal protein bS20 family.

Functionally, binds directly to 16S ribosomal RNA. This Clostridium perfringens (strain ATCC 13124 / DSM 756 / JCM 1290 / NCIMB 6125 / NCTC 8237 / Type A) protein is Small ribosomal subunit protein bS20.